The primary structure comprises 373 residues: Glutamine synthetase (373 aa).

Residues 24 to 106 (EKVQAMYIWI…VLCEVFKYNR (83 aa)) enclose the GS beta-grasp domain. The GS catalytic domain maps to 113–373 (LRHTCRRIMD…TGDEPFEYKN (261 aa)). Residue E134 coordinates ATP. Residues E134, E136, E196, and E203 each coordinate Mn(2+). 203–208 (EFQVGP) contributes to the ATP binding site. 246-247 (NW) contacts L-glutamate. Mn(2+) is bound at residue H253. ATP contacts are provided by residues 255–257 (NFS), R319, and R324. Residue R319 coordinates L-glutamate. An ADP-binding site is contributed by 336–338 (YFE). E338 lines the Mn(2+) pocket. Residue R340 participates in L-glutamate binding.

This sequence belongs to the glutamine synthetase family. Homooctamer and homotetramer. Biotin is required as a cofactor. Mg(2+) serves as cofactor. It depends on Mn(2+) as a cofactor. In terms of tissue distribution, expressed in retina, brain and liver. Little or no detectable expression in breast muscle, pancreas and spleen.

It is found in the cytoplasm. The protein localises to the mitochondrion. The enzyme catalyses L-glutamate + NH4(+) + ATP = L-glutamine + ADP + phosphate + H(+). It carries out the reaction L-glutamate + H(+) = 4-aminobutanoate + CO2. With respect to regulation, glutamate to glutamine ratio influences catalytic activity. At glutamate to glutamine ratios greater than 4, decarboxylase activity ceases. In the presence of manganese, synthetase activity is limited to concentrations between 10 mM and 20 mM, whereas decarboxylase activity is not affected. Both catalytic activities are inhibited by avidin. Its function is as follows. Glutamine synthetase that catalyzes the ATP-dependent conversion of glutamate and ammonia to glutamine. When expressed in liver, it may be involved in detoxifying intramitochondrially generated ammonia. Also acts as glutamate decarboxylase by catalyzing the production of 4-aminobutanoate (gamma-aminobutyric acid, GABA) in a pyridoxal phosphate-independent manner. This Gallus gallus (Chicken) protein is Glutamine synthetase.